Consider the following 239-residue polypeptide: 2-C-methyl-D-erythritol 4-phosphate cytidylyltransferase (239 aa).

Belongs to the IspD/TarI cytidylyltransferase family. IspD subfamily. Homodimer.

It carries out the reaction 2-C-methyl-D-erythritol 4-phosphate + CTP + H(+) = 4-CDP-2-C-methyl-D-erythritol + diphosphate. Its pathway is isoprenoid biosynthesis; isopentenyl diphosphate biosynthesis via DXP pathway; isopentenyl diphosphate from 1-deoxy-D-xylulose 5-phosphate: step 2/6. Catalyzes the formation of 4-diphosphocytidyl-2-C-methyl-D-erythritol from CTP and 2-C-methyl-D-erythritol 4-phosphate (MEP). The polypeptide is 2-C-methyl-D-erythritol 4-phosphate cytidylyltransferase (Sodalis glossinidius (strain morsitans)).